A 345-amino-acid polypeptide reads, in one-letter code: Protein Tob1 (345 aa).

A Bipartite nuclear localization signal motif is present at residues 22 to 39; it reads RRRVNIFGEELERLLKKK. The tract at residues 82 to 92 is important for nuclear localization; that stretch reads VRGNLPQDLSV. Positions 144–160 are enriched in low complexity; it reads DPASSVSSSPSPPFGHS. The tract at residues 144–171 is disordered; sequence DPASSVSSSPSPPFGHSAAVSPTFMPRS. The segment at 161–218 is required for interaction with CPEB3; it reads AAVSPTFMPRSTQPLTFTTATFAATKFGSTKMKNSGRSNKVARTSPINLGLNVNDLLK. Phosphothreonine is present on threonine 204. The short motif at 226 to 234 is the Nuclear export signal element; it reads MHSLYGLGL. The tract at residues 231 to 267 is disordered; sequence GLGLGSQQQPQQQQQPAQPPPPPPPPQQQQQQKTSAL. Positions 237 to 246 are enriched in low complexity; it reads QQQPQQQQQP. A compositionally biased stretch (pro residues) spans 247-257; it reads AQPPPPPPPPQ.

This sequence belongs to the BTG family. Interacts with ERBB2. Interacts with CNOT7. Interacts with CPEB3 (via C-terminal RNA-binding region); recruits CNOT7 to CPEB3 to form a ternary complex required for mRNA deadenylation and decay. Interacts with CNOT8. Interacts with CPEB4. In terms of processing, phosphorylated on Ser and Thr residues. Ubiquitous.

The protein resides in the cytoplasm. It is found in the nucleus. Anti-proliferative protein; the function is mediated by association with deadenylase subunits of the CCR4-NOT complex. Mediates CPEB3-accelerated mRNA deadenylation by binding to CPEB3 and recruiting CNOT7 which leads to target mRNA deadenylation and decay. The sequence is that of Protein Tob1 (TOB1) from Homo sapiens (Human).